The chain runs to 416 residues: Phosphoglycerate kinase (416 aa).

Substrate is bound by residues Asp-24 to Asn-26, Arg-40, His-63 to Arg-66, Arg-122, and Arg-162. Residues Lys-212, Gly-300, Glu-331, and Gly-360 to Ser-363 each bind ATP.

The protein belongs to the phosphoglycerate kinase family. Monomer.

The protein localises to the cytoplasm. The enzyme catalyses (2R)-3-phosphoglycerate + ATP = (2R)-3-phospho-glyceroyl phosphate + ADP. It functions in the pathway carbohydrate degradation; glycolysis; pyruvate from D-glyceraldehyde 3-phosphate: step 2/5. In Mycobacterium ulcerans (strain Agy99), this protein is Phosphoglycerate kinase.